The following is a 216-amino-acid chain: Ethylene-responsive transcription factor ERF016 (216 aa).

Positions 6–63 form a DNA-binding region, AP2/ERF; that stretch reads KYTGVRKRKWGKWVAEIRLPNSRDRIWLGSFDSAEKAARAFDAALYCLRGPGARFNFP. Positions 121–145 are disordered; sequence EINSGSGGPTLGQVGEDNNNEGNSN. Residues 135–145 show a composition bias toward low complexity; sequence GEDNNNEGNSN.

The protein belongs to the AP2/ERF transcription factor family. ERF subfamily.

It localises to the nucleus. Its function is as follows. Probably acts as a transcriptional activator. Binds to the GCC-box pathogenesis-related promoter element. May be involved in the regulation of gene expression by stress factors and by components of stress signal transduction pathways. The chain is Ethylene-responsive transcription factor ERF016 (ERF016) from Arabidopsis thaliana (Mouse-ear cress).